The primary structure comprises 192 residues: Orotate phosphoribosyltransferase (192 aa).

116-124 (EDIVTTGLS) is a 5-phospho-alpha-D-ribose 1-diphosphate binding site. Orotate is bound by residues Thr-120 and Arg-148.

The protein belongs to the purine/pyrimidine phosphoribosyltransferase family. PyrE subfamily. As to quaternary structure, homodimer. Requires Mg(2+) as cofactor.

The enzyme catalyses orotidine 5'-phosphate + diphosphate = orotate + 5-phospho-alpha-D-ribose 1-diphosphate. It functions in the pathway pyrimidine metabolism; UMP biosynthesis via de novo pathway; UMP from orotate: step 1/2. In terms of biological role, catalyzes the transfer of a ribosyl phosphate group from 5-phosphoribose 1-diphosphate to orotate, leading to the formation of orotidine monophosphate (OMP). This Bartonella bacilliformis (strain ATCC 35685 / KC583 / Herrer 020/F12,63) protein is Orotate phosphoribosyltransferase.